A 443-amino-acid polypeptide reads, in one-letter code: Delta(6)-fatty-acid desaturase fat-3 (443 aa).

A Cytochrome b5 heme-binding domain is found at methionine 1–aspartate 71. A run of 3 helical transmembrane segments spans residues isoleucine 136–leucine 156, threonine 296–leucine 316, and valine 318–phenylalanine 338.

This sequence belongs to the fatty acid desaturase type 1 family.

It is found in the membrane. It carries out the reaction (9Z,12Z)-octadecadienoyl-CoA + 2 Fe(II)-[cytochrome b5] + O2 + 2 H(+) = (6Z,9Z,12Z)-octadecatrienoyl-CoA + 2 Fe(III)-[cytochrome b5] + 2 H2O. It catalyses the reaction (9Z,12Z,15Z)-octadecatrienoyl-CoA + 2 Fe(II)-[cytochrome b5] + O2 + 2 H(+) = (6Z,9Z,12Z,15Z)-octadecatetraenoyl-CoA + 2 Fe(III)-[cytochrome b5] + 2 H2O. It participates in lipid metabolism; polyunsaturated fatty acid biosynthesis. Can function as a Delta(6) fatty acid desaturase. Introduces a double bond in the fatty acid chain 6 carbons away from carboxy terminal to biosynthesize polyunsaturated fatty acids (PUFAs) endogenously (PUFAs are essential for membrane structure and many cellular and physiological processes). Acts on a variety of substrates such as linoleoyl-CoA ((9Z,12Z)-octadecadienoyl-CoA, C18:2n-6) and alpha-linolenoyl-CoA ((9Z,12Z,15Z)-octadecatrienoyl-CoA, C18:3n-3) to produce gamma-linolenoyl-CoA ((6Z,9Z,12Z)-octadecatrienoyl-CoA, C18:3n-6) and (6Z,9Z,12Z,15Z)-octadecatetraenoyl-CoA (18:4n-3) respectively. Unlike plants, Caenorhabditis elegans desaturases seem to use fatty acyl-CoAs as substrates. Plays a role in synaptic vesicle recycling by regulating synaptojanin unc-26 localization at synapses. The sequence is that of Delta(6)-fatty-acid desaturase fat-3 (fat-3) from Caenorhabditis elegans.